The sequence spans 171 residues: UPF0312 protein MW2606 (171 aa).

The protein belongs to the UPF0312 family.

This is UPF0312 protein MW2606 from Staphylococcus aureus (strain MW2).